The sequence spans 124 residues: MFPIASRRILLNASVLPLRLCNRNFTTTRISYNVIQDLYLRELKDTKLAPSTLQDAEGNVKPWNPPQKPNLPELELQGPEALKAYTEQNVETAHVAKESEEGESEPIEEDWLVLDDAEETKESH.

Residues 1 to 32 constitute a mitochondrion transit peptide; it reads MFPIASRRILLNASVLPLRLCNRNFTTTRISY. Positions 89 to 124 are disordered; the sequence is NVETAHVAKESEEGESEPIEEDWLVLDDAEETKESH. Over residues 100-124 the composition is skewed to acidic residues; sequence EEGESEPIEEDWLVLDDAEETKESH.

This sequence belongs to the ATPase h subunit family. As to quaternary structure, F-type ATPases have 2 components, CF(1) - the catalytic core - and CF(0) - the membrane proton channel. In yeast, the dimeric form of ATP synthase consists of 17 polypeptides: alpha, beta, gamma, delta, epsilon, 4 (B), 5 (OSCP), 6 (A), 8, 9 (C), d, E (Tim11), f, g, h, i/j and k.

It localises to the mitochondrion. It is found in the mitochondrion inner membrane. Mitochondrial membrane ATP synthase (F(1)F(0) ATP synthase or Complex V) produces ATP from ADP in the presence of a proton gradient across the membrane which is generated by electron transport complexes of the respiratory chain. F-type ATPases consist of two structural domains, F(1) - containing the extramembraneous catalytic core and F(0) - containing the membrane proton channel, linked together by a central stalk and a peripheral stalk. During catalysis, ATP synthesis in the catalytic domain of F(1) is coupled via a rotary mechanism of the central stalk subunits to proton translocation. Part of the complex F(0) domain. Minor subunit located with subunit a in the membrane. In Saccharomyces cerevisiae (strain ATCC 204508 / S288c) (Baker's yeast), this protein is ATP synthase subunit H, mitochondrial (ATP14).